The primary structure comprises 363 residues: Fructose-bisphosphate aldolase C (363 aa).

Tyr-5 is subject to Phosphotyrosine. Ser-36, Ser-39, and Ser-45 each carry phosphoserine. Arg-56 serves as a coordination point for substrate. Residue Lys-111 is modified to N6-acetyllysine. Lys-147 serves as a coordination point for substrate. Glu-188 serves as the catalytic Proton acceptor. The active-site Schiff-base intermediate with dihydroxyacetone-P is the Lys-230.

This sequence belongs to the class I fructose-bisphosphate aldolase family. As to quaternary structure, homotetramer. Interacts with ATP6V1E1. Expressed exclusively in Purkinje cells in bands running from anterior to posterior across most of the cerebellum. Expressed at higher levels in the brains of BSE-infected animals.

The catalysed reaction is beta-D-fructose 1,6-bisphosphate = D-glyceraldehyde 3-phosphate + dihydroxyacetone phosphate. It functions in the pathway carbohydrate degradation; glycolysis; D-glyceraldehyde 3-phosphate and glycerone phosphate from D-glucose: step 4/4. This chain is Fructose-bisphosphate aldolase C (Aldoc), found in Mus musculus (Mouse).